The following is a 290-amino-acid chain: Ubiquinone biosynthesis protein COQ4, mitochondrial (290 aa).

The N-terminal 32 residues, 1–32, are a transit peptide targeting the mitochondrion; that stretch reads MAKRVCVGDLRKLAGSVSTPSRCILPPHARCF. 4 residues coordinate Zn(2+): His168, Asp169, His172, and Glu184. Residues 260 to 290 are disordered; that stretch reads KPPDLREMRKAEREAQKKDKEAKETMTRAAV.

It belongs to the COQ4 family. Component of a multi-subunit COQ enzyme complex, composed of at least COQ3, COQ4, COQ5, COQ6, COQ7 and COQ9. The cofactor is Zn(2+).

Its subcellular location is the mitochondrion inner membrane. It carries out the reaction a 4-hydroxy-3-methoxy-5-(all-trans-polyprenyl)benzoate + H(+) = a 2-methoxy-6-(all-trans-polyprenyl)phenol + CO2. It functions in the pathway cofactor biosynthesis; ubiquinone biosynthesis. Lyase that catalyzes the C1-decarboxylation of 4-hydroxy-3-methoxy-5-(all-trans-polyprenyl)benzoic acid into 2-methoxy-6-(all-trans-polyprenyl)phenol during ubiquinone biosynthesis. The sequence is that of Ubiquinone biosynthesis protein COQ4, mitochondrial from Phaeosphaeria nodorum (strain SN15 / ATCC MYA-4574 / FGSC 10173) (Glume blotch fungus).